The chain runs to 1213 residues: DNA-directed RNA polymerase subunit beta' (1213 aa).

The Zn(2+) site is built by Cys60, Cys62, Cys75, and Cys78. Asp450, Asp452, and Asp454 together coordinate Mg(2+). Residues Cys819, Cys893, Cys900, and Cys903 each coordinate Zn(2+).

The protein belongs to the RNA polymerase beta' chain family. The RNAP catalytic core consists of 2 alpha, 1 beta, 1 beta' and 1 omega subunit. When a sigma factor is associated with the core the holoenzyme is formed, which can initiate transcription. It depends on Mg(2+) as a cofactor. The cofactor is Zn(2+).

The enzyme catalyses RNA(n) + a ribonucleoside 5'-triphosphate = RNA(n+1) + diphosphate. Functionally, DNA-dependent RNA polymerase catalyzes the transcription of DNA into RNA using the four ribonucleoside triphosphates as substrates. The sequence is that of DNA-directed RNA polymerase subunit beta' from Streptococcus pyogenes serotype M28 (strain MGAS6180).